A 498-amino-acid chain; its full sequence is Phosphonates import ATP-binding protein PhnC (498 aa).

The segment at 1–27 (MPQRPEAARAGPVAGPDAASKPAPGPA) is disordered. Residues 28–269 (LTLRGAGRAY…DLGELYEARR (242 aa)) form the ABC transporter domain. Residue 60–67 (GPSGAGKS) participates in ATP binding. The segment at 270–498 (GAADPARAPA…LEVARAEVPP (229 aa)) is lysR substrate binding domain.

This sequence belongs to the ABC transporter superfamily. Phosphonates importer (TC 3.A.1.9.1) family. In terms of assembly, the complex is composed of two ATP-binding proteins (PhnC), two transmembrane proteins (PhnE) and a solute-binding protein (PhnD).

Its subcellular location is the cell inner membrane. The catalysed reaction is phosphonate(out) + ATP + H2O = phosphonate(in) + ADP + phosphate + H(+). Functionally, part of the ABC transporter complex PhnCDE involved in phosphonates import. Responsible for energy coupling to the transport system. In Anaeromyxobacter dehalogenans (strain 2CP-C), this protein is Phosphonates import ATP-binding protein PhnC.